Here is a 521-residue protein sequence, read N- to C-terminus: GRAS family protein RAD1 (521 aa).

The 384-residue stretch at 137 to 520 (DGSCADGMRL…KPIVAVSCWK (384 aa)) folds into the GRAS domain. Residues 144–212 (MRLVQLLIAC…PIGNNSAGSD (69 aa)) are leucine repeat I (LRI). Residues 231-301 (FKLVYENCPH…HRVRRLRITA (71 aa)) are VHIID. The VHIID signature appears at 262-266 (LHVVD). Positions 311 to 343 (VIGEELSIYAKNLGIHLEFSIVEKNLENLKPKD) are leucine repeat II (LRII). The PFYRE stretch occupies residues 352–443 (LVVNSILQLH…QFYFAEEIKN (92 aa)). Positions 446-520 (SCEGPLRMER…KPIVAVSCWK (75 aa)) are SAW.

It belongs to the GRAS family. As to quaternary structure, interacts with RAM1. Interacts with NSP2.

The protein resides in the nucleus. Its function is as follows. Transcription factor acting as a regulator of arbuscular mycorrhiza (AM)-related genes (e.g. STR). Required for the morphogenesis of arbuscules upon symbiosis with AM fungi (e.g. Glomus versiforme). Also involved in restricting mycorrhizal colonization of the root meristem. The sequence is that of GRAS family protein RAD1 from Medicago truncatula (Barrel medic).